The sequence spans 129 residues: Modulator protein MzrA (129 aa).

At 1-14 (MINFRGRFGRPLWH) the chain is on the cytoplasmic side. Residues 15-35 (YLVLPVVLLLLAVILLTPMIV) traverse the membrane as a helical segment. Residues 36–129 (QTESTLKIRP…VFRSNQQNLG (94 aa)) are Periplasmic-facing.

It belongs to the MzrA family. In terms of assembly, interacts with EnvZ.

It is found in the cell inner membrane. Functionally, modulates the activity of the EnvZ/OmpR two-component regulatory system, probably by directly modulating EnvZ enzymatic activity and increasing stability of phosphorylated OmpR. This Yersinia pestis (strain Pestoides F) protein is Modulator protein MzrA.